A 318-amino-acid polypeptide reads, in one-letter code: uncharacterized protein (318 aa).

This is an uncharacterized protein from Ictaluridae (bullhead catfishes).